A 422-amino-acid chain; its full sequence is Glucuronoxylanase XynC (422 aa).

A signal peptide spans 1–32 (MIPRIKKTICVLLVCFTMLSVMLGPGATEVLA). The active-site Proton donor is the Glu171. The active-site Nucleophile is Glu260.

Belongs to the glycosyl hydrolase 30 family.

Its subcellular location is the secreted. The catalysed reaction is Endohydrolysis of (1-&gt;4)-beta-D-xylosyl links in some glucuronoarabinoxylans.. Its pathway is glycan degradation; xylan degradation. In terms of biological role, catalyzes the depolymerization of methylglucuronoxylan (MeGAXn) from different sources. It cleaves the beta-1,4-xylosidic bond penultimate to that linking carbon one of the xylose residue substituted with alpha-1,2-linked 4-O-methyl-D-glucuronate (MeGA). The polypeptide is Glucuronoxylanase XynC (xynC) (Bacillus subtilis (strain 168)).